Reading from the N-terminus, the 304-residue chain is Nicotinamide/nicotinic acid mononucleotide adenylyltransferase 2 (304 aa).

NAD(+)-binding residues include Ser16 and Phe17. His24 is a binding site for ATP. Trp92 and Thr95 together coordinate NAD(+). S-palmitoyl cysteine attachment occurs at residues Cys161 and Cys162. 5 residues coordinate NAD(+): Gly197, Asp199, Leu209, Trp210, and Arg229. 268-271 provides a ligand contact to ATP; the sequence is TKSR.

Belongs to the eukaryotic NMN adenylyltransferase family. In terms of assembly, monomer. Mg(2+) serves as cofactor.

The protein localises to the golgi apparatus membrane. Its subcellular location is the cytoplasmic vesicle membrane. The protein resides in the cytoplasm. It localises to the cell projection. It is found in the axon. The catalysed reaction is beta-nicotinamide D-ribonucleotide + ATP + H(+) = diphosphate + NAD(+). The enzyme catalyses nicotinate beta-D-ribonucleotide + ATP + H(+) = deamido-NAD(+) + diphosphate. It participates in cofactor biosynthesis; NAD(+) biosynthesis; NAD(+) from nicotinamide D-ribonucleotide: step 1/1. Its pathway is cofactor biosynthesis; NAD(+) biosynthesis; deamido-NAD(+) from nicotinate D-ribonucleotide: step 1/1. Nicotinamide/nicotinate-nucleotide adenylyltransferase that acts as an axon maintenance factor. Axon survival factor required for the maintenance of healthy axons: acts by delaying Wallerian axon degeneration, an evolutionarily conserved process that drives the loss of damaged axons. Catalyzes the formation of NAD(+) from nicotinamide mononucleotide (NMN) and ATP. Can also use the deamidated form; nicotinic acid mononucleotide (NaMN) as substrate but with a lower efficiency. Also catalyzes the reverse reaction, i.e. the pyrophosphorolytic cleavage of NAD(+). For the pyrophosphorolytic activity prefers NAD(+), NADH and NaAD as substrates and degrades nicotinic acid adenine dinucleotide phosphate (NHD) less effectively. Also acts as an activator of ADP-ribosylation by supporting the catalytic activity of PARP16 and promoting mono-ADP-ribosylation of ribosomes by PARP16. May be involved in the maintenance of axonal integrity. The chain is Nicotinamide/nicotinic acid mononucleotide adenylyltransferase 2 (nmnat2) from Danio rerio (Zebrafish).